We begin with the raw amino-acid sequence, 284 residues long: Peflin (284 aa).

Positions 1–111 are disordered; it reads MASYPYRQGC…QPGLYGQGGA (111 aa). A compositionally biased stretch (low complexity) spans 8–26; the sequence is QGCPGAAGQAPGAPPGSYY. A run of 9 repeats spans residues 21-29, 31-39, 41-49, 50-58, 59-67, 76-84, 85-92, 93-100, and 101-109. A 9 X 9 AA approximate tandem repeat of [AP]-P-G-G-P-Y-G-G-P-P region spans residues 21 to 109; the sequence is PPGSYYPGPP…AQQPGLYGQG (89 aa). Residues 34 to 50 show a composition bias toward gly residues; that stretch reads GQYGSGLPPGGGYGGPA. Residues 65 to 75 show a composition bias toward low complexity; that stretch reads GHPNPGMFPSG. A compositionally biased stretch (gly residues) spans 76-90; sequence TPGGPYGGAAPGGPY. 5 EF-hand domains span residues 114-149, 155-183, 181-216, 217-253, and 254-283; these read NVDP…CNWS, TCLM…WKFI, KFIQ…MGYN, LSPQ…LQVL, and TEAF…ASRM. Ca(2+)-binding residues include Asp127, Asp129, Ser131, and Tyr133. Residue Lys137 forms a Glycyl lysine isopeptide (Lys-Gly) (interchain with G-Cter in ubiquitin) linkage. Glu138 provides a ligand contact to Ca(2+). Residues Asp194, Asp196, Ser198, Ser200, and Glu205 each contribute to the Ca(2+) site. A required for interaction with PDCD6 region spans residues 204–284; sequence TELQQALSQM…FVTMTASRML (81 aa).

As to quaternary structure, heterodimer; heterodimerizes (via the EF-hand 5) with PDCD6. Dissociates from PDCD6 in presence of calcium. Ubiquitinated by the BCR(KLHL12) E3 ubiquitin ligase complex.

The protein localises to the cytoplasm. It localises to the endoplasmic reticulum. Its subcellular location is the membrane. It is found in the cytoplasmic vesicle. The protein resides in the COPII-coated vesicle membrane. Functionally, calcium-binding protein that acts as an adapter that bridges unrelated proteins or stabilizes weak protein-protein complexes in response to calcium. Together with PDCD6, acts as a calcium-dependent adapter for the BCR(KLHL12) complex, a complex involved in endoplasmic reticulum (ER)-Golgi transport by regulating the size of COPII coats. In response to cytosolic calcium increase, the heterodimer formed with PDCD6 interacts with, and bridges together the BCR(KLHL12) complex and SEC31 (SEC31A or SEC31B), promoting monoubiquitination of SEC31 and subsequent collagen export, which is required for neural crest specification. Its role in the heterodimer formed with PDCD6 is however unclear: some evidence shows that PEF1 and PDCD6 work together and promote association between PDCD6 and SEC31 in presence of calcium. Other reports show that PEF1 dissociates from PDCD6 in presence of calcium, and may act as a negative regulator of PDCD6. Also acts as a negative regulator of ER-Golgi transport; possibly by inhibiting interaction between PDCD6 and SEC31. The chain is Peflin from Homo sapiens (Human).